The following is a 591-amino-acid chain: Aspartate--tRNA(Asp/Asn) ligase (591 aa).

Position 176 (E176) interacts with L-aspartate. An aspartate region spans residues 200–203; the sequence is QLFK. R222 is an L-aspartate binding site. ATP-binding positions include 222–224 and Q231; that span reads RDE. H450 provides a ligand contact to L-aspartate. E484 contacts ATP. R491 is a binding site for L-aspartate. Position 536–539 (536–539) interacts with ATP; sequence GLDR.

This sequence belongs to the class-II aminoacyl-tRNA synthetase family. Type 1 subfamily. Homodimer.

It localises to the cytoplasm. It carries out the reaction tRNA(Asx) + L-aspartate + ATP = L-aspartyl-tRNA(Asx) + AMP + diphosphate. In terms of biological role, aspartyl-tRNA synthetase with relaxed tRNA specificity since it is able to aspartylate not only its cognate tRNA(Asp) but also tRNA(Asn). Reaction proceeds in two steps: L-aspartate is first activated by ATP to form Asp-AMP and then transferred to the acceptor end of tRNA(Asp/Asn). This Bacillus anthracis (strain A0248) protein is Aspartate--tRNA(Asp/Asn) ligase.